The chain runs to 398 residues: Argininosuccinate synthase (398 aa).

ATP contacts are provided by residues 9-17 and alanine 36; that span reads AYSGGLDTS. 2 residues coordinate L-citrulline: tyrosine 87 and serine 92. ATP is bound at residue glycine 117. Positions 119, 123, and 124 each coordinate L-aspartate. L-citrulline is bound at residue asparagine 123. L-citrulline-binding residues include arginine 127, serine 176, serine 185, glutamate 261, and tyrosine 273.

Belongs to the argininosuccinate synthase family. Type 1 subfamily. As to quaternary structure, homotetramer.

It localises to the cytoplasm. It carries out the reaction L-citrulline + L-aspartate + ATP = 2-(N(omega)-L-arginino)succinate + AMP + diphosphate + H(+). Its pathway is amino-acid biosynthesis; L-arginine biosynthesis; L-arginine from L-ornithine and carbamoyl phosphate: step 2/3. The polypeptide is Argininosuccinate synthase (Desulfotalea psychrophila (strain LSv54 / DSM 12343)).